The primary structure comprises 636 residues: Carbon monoxide dehydrogenase 1 (636 aa).

6 residues coordinate [4Fe-4S] cluster: Cys38, Cys46, Cys47, Cys50, Cys55, and Cys69. The [Ni-4Fe-5S] cluster site is built by His262, Cys297, Cys335, Cys448, Cys478, and Cys528.

This sequence belongs to the Ni-containing carbon monoxide dehydrogenase family. As to quaternary structure, homodimer. The cofactor is [4Fe-4S] cluster. [Ni-4Fe-5S] cluster is required as a cofactor.

The protein resides in the cytoplasm. It localises to the cell membrane. It catalyses the reaction CO + 2 oxidized [2Fe-2S]-[ferredoxin] + H2O = 2 reduced [2Fe-2S]-[ferredoxin] + CO2 + 2 H(+). With respect to regulation, inactivated by O(2). In terms of biological role, CODH oxidizes carbon monoxide coupled, via CooF, to the reduction of a hydrogen cation by a hydrogenase (possibly CooH). The polypeptide is Carbon monoxide dehydrogenase 1 (cooS1) (Carboxydothermus hydrogenoformans (strain ATCC BAA-161 / DSM 6008 / Z-2901)).